The chain runs to 126 residues: Acidic phospholipase A2 3 (126 aa).

A propeptide spanning residues 1–7 (SNRPMPL) is cleaved from the precursor. Cystine bridges form between cysteine 18/cysteine 78, cysteine 33/cysteine 125, cysteine 35/cysteine 51, cysteine 50/cysteine 106, cysteine 57/cysteine 99, cysteine 67/cysteine 92, and cysteine 85/cysteine 97. Ca(2+)-binding residues include tyrosine 34, glycine 36, and glycine 38. Histidine 54 is a catalytic residue. Aspartate 55 serves as a coordination point for Ca(2+). The active site involves aspartate 100.

The protein belongs to the phospholipase A2 family. Group I subfamily. D49 sub-subfamily. The cofactor is Ca(2+). As to expression, expressed by the venom gland.

It localises to the secreted. It catalyses the reaction a 1,2-diacyl-sn-glycero-3-phosphocholine + H2O = a 1-acyl-sn-glycero-3-phosphocholine + a fatty acid + H(+). Functionally, PLA2 catalyzes the calcium-dependent hydrolysis of the 2-acyl groups in 3-sn-phosphoglycerides. The sequence is that of Acidic phospholipase A2 3 from Naja sagittifera (Andaman cobra).